The following is a 395-amino-acid chain: F-box only protein 7 (395 aa).

Residues 19–70 (NHDWSKLCPDILRKIIESLSSLDFYRAKIVCSDWYSVWKTCVKRPLRPWRII) form the F-box domain.

This is F-box only protein 7 (FBX7) from Arabidopsis thaliana (Mouse-ear cress).